A 4299-amino-acid chain; its full sequence is DNA-dependent protein kinase catalytic subunit (4299 aa).

Residues 551–590 adopt a coiled-coil conformation; that stretch reads KDLNSTIKKENNNNNNNKNKNNNNNQTLTKEEISKSIKKL. Disordered stretches follow at residues 557–577, 613–633, 878–917, and 1206–1230; these read IKKE…NNQT, DEND…DQDN, NSSD…MKFK, and SSSK…EDGT. Low complexity-rich tracts occupy residues 562–575, 617–631, 878–893, and 1206–1226; these read NNNN…NNNN, NNSN…NNDQ, NSSD…IDSG, and SSSK…NNNS. Ser2789 bears the Phosphoserine; by autocatalysis mark. Thr2814 and Thr2822 each carry phosphothreonine; by autocatalysis. Residues 2832-2867 show a composition bias toward low complexity; that stretch reads SSSQSYGGTNNNTGSSQLSSSSSSSGSQSSSQNNSS. Disordered regions lie at residues 2832–2881 and 3535–3559; these read SSSQ…PKLI and TTSS…SSSQ. Residues 3031 to 3707 form the FAT domain; that stretch reads KIKDISLNSN…YFPFKISSEQ (677 aa). The PI3K/PI4K catalytic domain occupies 3887–4226; that stretch reads FDTNVLVMGS…AKKKLELVNP (340 aa). The tract at residues 3893 to 3899 is G-loop; that stretch reads VMGSLRK. Positions 4092–4100 are catalytic loop; the sequence is GIGDRHLEN. The segment at 4112–4137 is activation loop; the sequence is GIDFGHAFGTATQFLPIPELMPFRLT. The 33-residue stretch at 4267-4299 folds into the FATC domain; sequence VCSSVKEQIDCLIDQSTDPNILSRAWVGWNGAL.

This sequence belongs to the PI3/PI4-kinase family. DNAPK subfamily. May be phosphorylated upon DNA damage. Could be autophosphorylated. Autophosphorylation induces a conformational change that leads to remodeling of the DNA-PK complex, requisite for efficient end processing and DNA repair. In terms of processing, autophosphorylated on Ser-2789, Thr-2814 and Thr-2822. Ser-2789 is a DNA damage-inducible phosphorylation site (inducible with ionizing radiation, IR).

It is found in the nucleus. Its subcellular location is the nucleolus. It catalyses the reaction L-seryl-[protein] + ATP = O-phospho-L-seryl-[protein] + ADP + H(+). The enzyme catalyses L-threonyl-[protein] + ATP = O-phospho-L-threonyl-[protein] + ADP + H(+). Inhibited by wortmannin. Activity of the enzyme seems to be attenuated by autophosphorylation. Serine/threonine-protein kinase that acts as a molecular sensor for DNA damage. Is recruited to DNA ends by the Ku70/Ku80 heterodimer and is involved in DNA non-homologous end joining (NHEJ) required for double-strand break (DSB) repair and V(D)J recombination. This activity is only apparent when DNA damage is administered in G1 phase of the cell cycle. Required for efficient signaling of DNA double-stranded breaks via phosphorylation of H2AX during G1. The sequence is that of DNA-dependent protein kinase catalytic subunit (dnapkcs) from Dictyostelium discoideum (Social amoeba).